The sequence spans 146 residues: MRNEMHLQFSALSQNESFARVTVAAFVAQLDPTMDELTEIKTVVSEAVTNAIIHGYNNDPNGIVYISVVIEDGVVHLTIKDEGVGIANIEEARQPLFTTKPELERSGMGFTIMENFMDEVVVQSEVNKGTTVYLKKYITKSKALCN.

Belongs to the anti-sigma-factor family.

The catalysed reaction is L-seryl-[protein] + ATP = O-phospho-L-seryl-[protein] + ADP + H(+). The enzyme catalyses L-threonyl-[protein] + ATP = O-phospho-L-threonyl-[protein] + ADP + H(+). In terms of biological role, binds to sigma F and blocks its ability to form an RNA polymerase holoenzyme (E-sigma F). Phosphorylates SpoIIAA on a serine residue. This phosphorylation may enable SpoIIAA to act as an anti-anti-sigma factor that counteracts SpoIIAB and thus releases sigma F from inhibition. In Geobacillus sp. (strain WCH70), this protein is Anti-sigma F factor.